The sequence spans 229 residues: Uracil-DNA glycosylase (229 aa).

Residue Asp-67 is the Proton acceptor of the active site.

It belongs to the uracil-DNA glycosylase (UDG) superfamily. UNG family.

The protein resides in the cytoplasm. The enzyme catalyses Hydrolyzes single-stranded DNA or mismatched double-stranded DNA and polynucleotides, releasing free uracil.. Functionally, excises uracil residues from the DNA which can arise as a result of misincorporation of dUMP residues by DNA polymerase or due to deamination of cytosine. In Coxiella burnetii (strain CbuK_Q154) (Coxiella burnetii (strain Q154)), this protein is Uracil-DNA glycosylase.